The following is a 344-amino-acid chain: 2-methyl-6-phytyl-1,4-hydroquinone methyltransferase, chloroplastic (344 aa).

The transit peptide at Met-1–Ser-62 directs the protein to the chloroplast. Topologically, residues Ala-63–Arg-313 are chloroplast intermembrane. The segment at Val-121–Phe-130 is SAM motif I. The interval Cys-166–Pro-179 is SAM motif II. The tract at residues Arg-207–Pro-220 is SAM motif III. The helical transmembrane segment at Phe-314 to Lys-334 threads the bilayer. The Stromal portion of the chain corresponds to Asp-335–Leu-344.

The protein belongs to the class I-like SAM-binding methyltransferase superfamily. MPBQ/MBSQ MT family.

It is found in the plastid. Its subcellular location is the chloroplast inner membrane. The enzyme catalyses 2-methyl-6-phytyl-1,4-benzene-1,4-diol + S-adenosyl-L-methionine = 2,3-dimethyl-6-phytylbenzene-1,4-diol + S-adenosyl-L-homocysteine + H(+). The catalysed reaction is 2-methyl-6-(all-trans-nonaprenyl)benzene-1,4-diol + S-adenosyl-L-methionine = plastoquinol-9 + S-adenosyl-L-homocysteine + H(+). It carries out the reaction 6-geranylgeranyl-2-methylbenzene-1,4-diol + S-adenosyl-L-methionine = 6-geranylgeranyl-2,3-dimethylbenzene-1,4-diol + S-adenosyl-L-homocysteine + H(+). The protein operates within cofactor biosynthesis; tocopherol biosynthesis. Its function is as follows. Involved in a key methylation step in both tocopherols (vitamin E) and plastoquinone synthesis. Catalyzes the conversion of 2-methyl-6-phytyl-1,4-hydroquinone (MPBQ) to 2,3-dimethyl-6-phytyl-1,4-hydroquinone (DMPQ, a substrate for tocopherol cyclase), and 2-methyl-6-solanyl-1,4-benzoquinone (MSBQ) to plastoquinone. The chain is 2-methyl-6-phytyl-1,4-hydroquinone methyltransferase, chloroplastic from Spinacia oleracea (Spinach).